Here is a 447-residue protein sequence, read N- to C-terminus: UDP-N-acetylmuramate--L-alanine ligase (447 aa).

108-114 lines the ATP pocket; sequence GSHGKTS.

This sequence belongs to the MurCDEF family.

It localises to the cytoplasm. It carries out the reaction UDP-N-acetyl-alpha-D-muramate + L-alanine + ATP = UDP-N-acetyl-alpha-D-muramoyl-L-alanine + ADP + phosphate + H(+). It participates in cell wall biogenesis; peptidoglycan biosynthesis. Its function is as follows. Cell wall formation. The protein is UDP-N-acetylmuramate--L-alanine ligase of Listeria monocytogenes serovar 1/2a (strain ATCC BAA-679 / EGD-e).